Reading from the N-terminus, the 216-residue chain is Large ribosomal subunit protein uL3 (216 aa).

The disordered stretch occupies residues 132–155 (QDASHGNSRSHRVPGSIGQNQTPG). Gln-152 bears the N5-methylglutamine mark.

This sequence belongs to the universal ribosomal protein uL3 family. Part of the 50S ribosomal subunit. Forms a cluster with proteins L14 and L19. Methylated by PrmB.

In terms of biological role, one of the primary rRNA binding proteins, it binds directly near the 3'-end of the 23S rRNA, where it nucleates assembly of the 50S subunit. The sequence is that of Large ribosomal subunit protein uL3 from Legionella pneumophila (strain Paris).